The primary structure comprises 247 residues: Ferredoxin:CoB-CoM heterodisulfide reductase subunit C (247 aa).

One can recognise a 4Fe-4S ferredoxin-type domain in the interval 32 to 62; sequence TPESLGLDRCIQCGACTASCPAARFTDYSPR. Cysteine 41, cysteine 44, cysteine 47, cysteine 51, cysteine 84, cysteine 87, cysteine 90, and cysteine 94 together coordinate [4Fe-4S] cluster. Positions 216-240 are enriched in basic and acidic residues; sequence RTGTSCTEKKKNSGDLGFESDREYT. The interval 216–247 is disordered; sequence RTGTSCTEKKKNSGDLGFESDREYTGQEALTV.

This sequence belongs to the HdrC family. As to quaternary structure, the ferredoxin:CoB-CoM heterodisulfide reductase is composed of three subunits; HdrA1, HdrB1 and HdrC1. It depends on [4Fe-4S] cluster as a cofactor.

It is found in the cytoplasm. The catalysed reaction is coenzyme B + coenzyme M + 2 oxidized [2Fe-2S]-[ferredoxin] = coenzyme M-coenzyme B heterodisulfide + 2 reduced [2Fe-2S]-[ferredoxin] + 2 H(+). Its pathway is cofactor metabolism; coenzyme M-coenzyme B heterodisulfide reduction; coenzyme B and coenzyme M from coenzyme M-coenzyme B heterodisulfide: step 1/1. Its function is as follows. Part of a complex that catalyzes the reversible reduction of CoM-S-S-CoB to the thiol-coenzymes H-S-CoM (coenzyme M) and H-S-CoB (coenzyme B). Probably involved in methylotrophic methanogenesis but not in aceticlastic methanogenesis. The polypeptide is Ferredoxin:CoB-CoM heterodisulfide reductase subunit C (Methanosarcina acetivorans (strain ATCC 35395 / DSM 2834 / JCM 12185 / C2A)).